The chain runs to 502 residues: Hexokinase-9 (502 aa).

The helical transmembrane segment at 5–24 (AALASAAMAAAAVAVVSTVL) threads the bilayer. The Hexokinase domain maps to 37–488 (RAEAVLLRDL…SGVGAALLAA (452 aa)). The interval 92–230 (SGGEKGMFYA…GLDMKVTALV (139 aa)) is hexokinase small subdomain. ADP contacts are provided by Gly-106, Thr-107, and Asn-108. Thr-196, Lys-197, Asn-231, and Asp-232 together coordinate D-glucose. Positions 231–477 (NDTVGTLAAG…PSVMIKHVND (247 aa)) are hexokinase large subdomain. Thr-255 contributes to the ADP binding site. Residues Asn-258, Glu-286, and Glu-317 each coordinate D-glucose. Gly-442 is an ADP binding site.

Belongs to the hexokinase family. In terms of tissue distribution, expressed in roots, leaves, flowers, immature seeds, endosperm and seed coat.

It localises to the plastid. It is found in the chloroplast outer membrane. It catalyses the reaction a D-hexose + ATP = a D-hexose 6-phosphate + ADP + H(+). The enzyme catalyses D-fructose + ATP = D-fructose 6-phosphate + ADP + H(+). The catalysed reaction is D-glucose + ATP = D-glucose 6-phosphate + ADP + H(+). It functions in the pathway carbohydrate metabolism; hexose metabolism. It participates in carbohydrate degradation; glycolysis; D-glyceraldehyde 3-phosphate and glycerone phosphate from D-glucose: step 1/4. In terms of biological role, fructose and glucose phosphorylating enzyme. The polypeptide is Hexokinase-9 (HXK9) (Oryza sativa subsp. japonica (Rice)).